The chain runs to 916 residues: DNA topoisomerase 1 alpha (916 aa).

Residues 1-369 (MGTETVSKPV…SSPSSGDGQK (369 aa)) are disordered. Residues 34-47 (SNSNQSKSNSQRSK) are compositionally biased toward low complexity. Residues 60 to 76 (PVTSPNGTTPSNKTSIV) show a composition bias toward polar residues. Residues 77-93 (KSSMPSSSSKASPAKSP) show a composition bias toward low complexity. A compositionally biased stretch (basic and acidic residues) spans 102-119 (VKDRSQLQKDQSECKIEH). Positions 130–148 (SILSGNKGPTSSRQVSSPQ) are enriched in polar residues. Basic and acidic residues predominate over residues 149-168 (PEKKNNGDRPLDRASRIIKD). S170 is modified (phosphoserine). Over residues 230–239 (KNSSADQSSL) the composition is skewed to polar residues. Residues 253–267 (MKQDSVKKEIDDKGR) are compositionally biased toward basic and acidic residues. Residues 285-294 (GTDDDDDDDV) show a composition bias toward acidic residues. The residue at position 286 (T286) is a Phosphothreonine. Positions 354–366 (YSTSSKSSPSSGD) are enriched in low complexity. Interaction with DNA stretches follow at residues 577–578 (KY), 640–645 (RAGNEK), and 731–733 (TAK). One can recognise a Topo IB-type catalytic domain in the interval 584-914 (GSSLKGLSDK…MDVEPEYRFS (331 aa)). The stretch at 778-860 (QRTVSKTHGA…ERDMHTKEDL (83 aa)) forms a coiled coil. Y872 acts as the O-(3'-phospho-DNA)-tyrosine intermediate in catalysis.

Belongs to the type IB topoisomerase family. As to quaternary structure, interacts with DEK3. Expressed in inflorescence meristems. Expressed in primordia of sepals, petals, stamens, carpels and ovules. Expressed in midstage embryos.

It localises to the nucleus. The catalysed reaction is ATP-independent breakage of single-stranded DNA, followed by passage and rejoining.. Releases the supercoiling and torsional tension of DNA introduced during the DNA replication and transcription by transiently cleaving and rejoining one strand of the DNA duplex. Introduces a single-strand break via transesterification at a target site in duplex DNA. The scissile phosphodiester is attacked by the catalytic tyrosine of the enzyme, resulting in the formation of a DNA-(3'-phosphotyrosyl)-enzyme intermediate and the expulsion of a 5'-OH DNA strand. The free DNA strand then rotates around the intact phosphodiester bond on the opposing strand, thus removing DNA supercoils. Finally, in the religation step, the DNA 5'-OH attacks the covalent intermediate to expel the active-site tyrosine and restore the DNA phosphodiester backbone. Can complement a TOP1-deficient yeast mutant. Plays a critical role in the maintenance of a regular pattern of organ initiation. Topoisomerases I enzymes (TOP1A and TOP1B) are essential for plant survival. Functions together with the stem cell maintenance gene WUSCHEL (WUS) in stem cell regulation. Required to maintain developmentally regulated gene repression. Functions synergistically with chromatin remodeling factors. Is required for the repression of WUS expression in flower development. Plays a role in polycomb group (PcG) protein-mediated histone H3 trimethylation on 'Lys-27' (H3K27me3) at the WUS gene locus. H3K27me3 induces transcriptional repression of WUS. May assist AGAMOUS (AG) in recruiting PcG proteins to WUS locus. Reduces nucleosome density, especially at genes that are targets of PcG proteins. Plays a role in epigenetic silencing. Involved in RNA-directed DNA methylation (RdDM) by promoting Pol V transcription to generate long non-coding RNA transcripts. Is dispensable for Pol IV-mediated small interfering RNA (siRNA) biogenesis. Promotes transposable element (TE) silencing at endogenous RdDM target loci through histone H3 dimethylation of 'Lys-9' (H3K9me2). Promotes the production of Pol V-dependent long non-coding transcripts that facilitate the recruitment of siRNA-AGO4 and AGO4 occupancy at TEs. The sequence is that of DNA topoisomerase 1 alpha from Arabidopsis thaliana (Mouse-ear cress).